A 379-amino-acid chain; its full sequence is Nitric oxide reductase FlRd-NAD(+) reductase (379 aa).

The protein belongs to the FAD-dependent oxidoreductase family. FAD serves as cofactor.

Its subcellular location is the cytoplasm. It catalyses the reaction 2 reduced [nitric oxide reductase rubredoxin domain] + NAD(+) + H(+) = 2 oxidized [nitric oxide reductase rubredoxin domain] + NADH. The protein operates within nitrogen metabolism; nitric oxide reduction. Functionally, one of at least two accessory proteins for anaerobic nitric oxide (NO) reductase. Reduces the rubredoxin moiety of NO reductase. The polypeptide is Nitric oxide reductase FlRd-NAD(+) reductase (Pectobacterium atrosepticum (strain SCRI 1043 / ATCC BAA-672) (Erwinia carotovora subsp. atroseptica)).